The sequence spans 102 residues: Urease subunit beta (102 aa).

This sequence belongs to the urease beta subunit family. As to quaternary structure, heterotrimer of UreA (gamma), UreB (beta) and UreC (alpha) subunits. Three heterotrimers associate to form the active enzyme.

It is found in the cytoplasm. It carries out the reaction urea + 2 H2O + H(+) = hydrogencarbonate + 2 NH4(+). It functions in the pathway nitrogen metabolism; urea degradation; CO(2) and NH(3) from urea (urease route): step 1/1. This chain is Urease subunit beta, found in Blochmanniella pennsylvanica (strain BPEN).